A 205-amino-acid polypeptide reads, in one-letter code: Pyrrolidone-carboxylate peptidase (205 aa).

Residues E78, C141, and H165 contribute to the active site.

This sequence belongs to the peptidase C15 family. In terms of assembly, homotetramer.

It is found in the cytoplasm. It carries out the reaction Release of an N-terminal pyroglutamyl group from a polypeptide, the second amino acid generally not being Pro.. In terms of biological role, removes 5-oxoproline from various penultimate amino acid residues except L-proline. The polypeptide is Pyrrolidone-carboxylate peptidase (Thermosipho africanus (strain TCF52B)).